We begin with the raw amino-acid sequence, 165 residues long: SsrA-binding protein (165 aa).

Belongs to the SmpB family.

It localises to the cytoplasm. In terms of biological role, required for rescue of stalled ribosomes mediated by trans-translation. Binds to transfer-messenger RNA (tmRNA), required for stable association of tmRNA with ribosomes. tmRNA and SmpB together mimic tRNA shape, replacing the anticodon stem-loop with SmpB. tmRNA is encoded by the ssrA gene; the 2 termini fold to resemble tRNA(Ala) and it encodes a 'tag peptide', a short internal open reading frame. During trans-translation Ala-aminoacylated tmRNA acts like a tRNA, entering the A-site of stalled ribosomes, displacing the stalled mRNA. The ribosome then switches to translate the ORF on the tmRNA; the nascent peptide is terminated with the 'tag peptide' encoded by the tmRNA and targeted for degradation. The ribosome is freed to recommence translation, which seems to be the essential function of trans-translation. In Prochlorococcus marinus (strain MIT 9515), this protein is SsrA-binding protein.